Here is a 336-residue protein sequence, read N- to C-terminus: DNA-directed RNA polymerase subunit alpha (336 aa).

The alpha N-terminal domain (alpha-NTD) stretch occupies residues 1–233; sequence MSSNSFLTPR…EQFSFFADLE (233 aa). Positions 247 to 336 are alpha C-terminal domain (alpha-CTD); sequence IDPILLRPVD…YIKEPGHASS (90 aa).

The protein belongs to the RNA polymerase alpha chain family. In terms of assembly, homodimer. The RNAP catalytic core consists of 2 alpha, 1 beta, 1 beta' and 1 omega subunit. When a sigma factor is associated with the core the holoenzyme is formed, which can initiate transcription.

The catalysed reaction is RNA(n) + a ribonucleoside 5'-triphosphate = RNA(n+1) + diphosphate. DNA-dependent RNA polymerase catalyzes the transcription of DNA into RNA using the four ribonucleoside triphosphates as substrates. This chain is DNA-directed RNA polymerase subunit alpha, found in Nitrosomonas europaea (strain ATCC 19718 / CIP 103999 / KCTC 2705 / NBRC 14298).